A 180-amino-acid polypeptide reads, in one-letter code: Inorganic pyrophosphatase (180 aa).

Substrate-binding residues include K28, R42, and Y54. Residues D66, D71, and D102 each contribute to the Mg(2+) site. Y139 is a substrate binding site.

The protein belongs to the PPase family. In terms of assembly, homohexamer. Mg(2+) serves as cofactor.

The protein localises to the cytoplasm. It carries out the reaction diphosphate + H2O = 2 phosphate + H(+). In terms of biological role, hydrolyzes PPi generated in anabolic reactions. Functionally, catalyzes the hydrolysis of inorganic pyrophosphate (PPi) forming two phosphate ions. The protein is Inorganic pyrophosphatase of Pseudanabaena sp. (strain PCC 6903).